Reading from the N-terminus, the 423-residue chain is Cytidylate cyclase (423 aa).

The Guanylate cyclase domain maps to 79-184 (CSLFVDISGS…LKIRIGIDFG (106 aa)). Phe82 contributes to the a ribonucleoside 5'-triphosphate binding site. 3 residues coordinate Mn(2+): Asp84, Ile85, and Asp128. Residues 290–409 (ENEQFYSPRD…ICHDSFGLFI (120 aa)) are AGS-C domain.

This sequence belongs to the adenylyl cyclase class-4/guanylyl cyclase family. Pyrimidine cyclase subfamily. As to quaternary structure, homodimer. Mn(2+) serves as cofactor.

It is found in the cytoplasm. The enzyme catalyses CTP = 3',5'-cyclic CMP + diphosphate. In terms of biological role, pycsar (pyrimidine cyclase system for antiphage resistance) provides immunity against bacteriophage. The pyrimidine cyclase (PycC) synthesizes cyclic nucleotides in response to infection; these serve as specific second messenger signals. The signal activates the adjacent effector, leading to bacterial cell death and abortive phage infection. A clade E Pycsar system. The pyrimidine cyclase gene of a two-gene Pycsar system, weakly generates cyclic CMP (cCMP) from CTP, has little to no activity on ATP, GTP or UTP. Expression of this and adjacent effector SaPycTM (AC P0DV39) probably confers resistance to bacteriophage. The genes are probably only expressed in response to bacteriophage infection. The protein is Cytidylate cyclase of Staphylococcus aureus.